The primary structure comprises 602 residues: Aspartate--tRNA(Asp/Asn) ligase (602 aa).

Glutamate 176 is an L-aspartate binding site. Positions 200–203 (QQFK) are aspartate. Residues arginine 222 and histidine 452 each contribute to the L-aspartate site. 222–224 (RDE) contributes to the ATP binding site. Glutamate 490 is an ATP binding site. Arginine 497 lines the L-aspartate pocket. ATP is bound at residue 542–545 (GIDR).

Belongs to the class-II aminoacyl-tRNA synthetase family. Type 1 subfamily. As to quaternary structure, homodimer.

It is found in the cytoplasm. The catalysed reaction is tRNA(Asx) + L-aspartate + ATP = L-aspartyl-tRNA(Asx) + AMP + diphosphate. Functionally, aspartyl-tRNA synthetase with relaxed tRNA specificity since it is able to aspartylate not only its cognate tRNA(Asp) but also tRNA(Asn). Reaction proceeds in two steps: L-aspartate is first activated by ATP to form Asp-AMP and then transferred to the acceptor end of tRNA(Asp/Asn). The sequence is that of Aspartate--tRNA(Asp/Asn) ligase from Rickettsia canadensis (strain McKiel).